We begin with the raw amino-acid sequence, 209 residues long: A-type ATP synthase subunit D (209 aa).

It belongs to the V-ATPase D subunit family. Has multiple subunits with at least A(3), B(3), C, D, E, F, H, I and proteolipid K(x).

It is found in the cell membrane. Its function is as follows. Component of the A-type ATP synthase that produces ATP from ADP in the presence of a proton gradient across the membrane. The chain is A-type ATP synthase subunit D from Archaeoglobus fulgidus (strain ATCC 49558 / DSM 4304 / JCM 9628 / NBRC 100126 / VC-16).